The following is a 320-amino-acid chain: MSEKQTIKALPAHNPTQVKKLGPVSGFLSGGLAACGAVTLTNPFEVIKTRFQLQGQLTKLDPSKRIYKSVGQAFSLIARHEGIRGLQRGLGTAYVYQICLNGCRLGFYEPIRRTLNTWFLDDPKGNKLAINVASGAGSGLCGALFGSPFFLVKTRMQSYSPKFPVGQQYGYKHIFNAFSRIIKENGVKGLFVGADAAILRTVSGSSVQLPIYNWAKRMIEHYNLLEEGMIKHLTASAVSGFGVCCTMQIFDTVMTRMYNQKNKELYKNPIDCILKTIRSEGFFALYKGFGAHLARIAPHTIFCLTFVEQTNKLFLKFQKD.

Solcar repeat units lie at residues 21–114 (LGPV…IRRT), 126–218 (NKLA…AKRM), and 227–313 (EGMI…TNKL). The next 6 membrane-spanning stretches (helical) occupy residues 26 to 47 (GFLS…FEVI), 91 to 111 (GTAY…YEPI), 129 to 145 (AINV…GALF), 197 to 217 (AILR…WAKR), 233 to 253 (LTAS…FDTV), and 285 to 306 (LYKG…CLTF).

Belongs to the mitochondrial carrier (TC 2.A.29) family.

The protein resides in the mitochondrion inner membrane. The catalysed reaction is a dicarboxylate(in) + sulfate(out) = a dicarboxylate(out) + sulfate(in). It catalyses the reaction (2S)-2-isopropylmalate(in) + sulfate(out) = (2S)-2-isopropylmalate(out) + sulfate(in). It carries out the reaction (2R,3S)-3-isopropylmalate(in) + sulfate(out) = (2R,3S)-3-isopropylmalate(out) + sulfate(in). The enzyme catalyses malonate(in) + sulfate(out) = malonate(out) + sulfate(in). The catalysed reaction is oxaloacetate(in) + sulfate(out) = oxaloacetate(out) + sulfate(in). It catalyses the reaction thiosulfate(in) + sulfate(out) = thiosulfate(out) + sulfate(in). In terms of biological role, antiporter that exchanges dicarboxylates and sulfur oxoanions across the inner membrane of mitochondria. Exports alpha-isopropylmalate from mitochondrial matrix to the cytosol, where it serves as a precursor for leucine biosynthesis. In Schizosaccharomyces pombe (strain 972 / ATCC 24843) (Fission yeast), this protein is Mitochondrial oxaloacetate transport protein (oac1).